The sequence spans 493 residues: Cytochrome P450 2W1 (493 aa).

An N-terminal signal peptide occupies residues 1 to 23 (MALLLLGVWGILLLLGLWGLLQG). Asparagine 180 carries N-linked (GlcNAc...) asparagine glycosylation. Cysteine 436 is a heme binding site.

It belongs to the cytochrome P450 family. Heme is required as a cofactor. In terms of tissue distribution, detected in colon, ileum, and testes.

Its subcellular location is the endoplasmic reticulum lumen. It localises to the cell membrane. The protein resides in the microsome membrane. The catalysed reaction is all-trans-retinoate + reduced [NADPH--hemoprotein reductase] + O2 = all-trans-4-hydroxyretinoate + oxidized [NADPH--hemoprotein reductase] + H2O + H(+). It catalyses the reaction 1-(9Z-octadecenoyl)-sn-glycero-3-phosphocholine + reduced [NADPH--hemoprotein reductase] + O2 = 1-[8-hydroxy-(9Z)-octadecenoyl]-sn-glycero-3-phosphocholine + oxidized [NADPH--hemoprotein reductase] + H2O + H(+). It carries out the reaction 1-(9Z-octadecenoyl)-sn-glycero-3-phosphocholine + reduced [NADPH--hemoprotein reductase] + O2 = 1-[11-hydroxy-(9Z)-octadecenoyl]-sn-glycero-3-phosphocholine + oxidized [NADPH--hemoprotein reductase] + H2O + H(+). The enzyme catalyses 1-(9Z-octadecenoyl)-sn-glycero-3-phosphocholine + reduced [NADPH--hemoprotein reductase] + O2 = 1-[(9S,10R)-epoxy-octadecanoyl]-sn-glycero-3-phosphocholine + oxidized [NADPH--hemoprotein reductase] + H2O + H(+). The catalysed reaction is 1-(9Z-octadecenoyl)-sn-glycero-3-phosphocholine + reduced [NADPH--hemoprotein reductase] + O2 = 1-[(9R,10S)-epoxy-octadecanoyl]-sn-glycero-3-phosphocholine + oxidized [NADPH--hemoprotein reductase] + H2O + H(+). In terms of biological role, a cytochrome P450 monooxygenase that may play a role in retinoid and phospholipid metabolism. Catalyzes the hydroxylation of saturated carbon hydrogen bonds. Hydroxylates all trans-retinoic acid (atRA) to 4-hydroxyretinoate and may regulate atRA clearance. Other retinoids such as all-trans retinol and all-trans retinal are potential endogenous substrates. Catalyzes both epoxidation of double bonds and hydroxylation of carbon hydrogen bonds of the fatty acyl chain of 1-acylphospholipids/2-lysophospholipids. Can metabolize various lysophospholipids classes including lysophosphatidylcholines (LPCs), lysophosphatidylinositols (LPIs), lysophosphatidylserines (LPSs), lysophosphatidylglycerols (LPGs), lysophosphatidylethanolamines (LPEs) and lysophosphatidic acids (LPAs). Has low or no activity toward 2-acylphospholipids/1-lysophospholipids, diacylphospholipids and free fatty acids. May play a role in tumorigenesis by activating procarcinogens such as aflatoxin B1, polycyclic aromatic hydrocarbon dihydrodiols and aromatic amines. Mechanistically, uses molecular oxygen inserting one oxygen atom into a substrate, and reducing the second into a water molecule, with two electrons provided by NADPH via cytochrome P450 reductase (CPR; NADPH-ferrihemoprotein reductase). This chain is Cytochrome P450 2W1 (Cyp2w1), found in Mus musculus (Mouse).